The primary structure comprises 159 residues: Eukaryotic translation initiation factor 5A-4 (159 aa).

Positions Met1–Ala12 are enriched in basic and acidic residues. A disordered region spans residues Met1 to Pro21. Lys52 bears the Hypusine mark.

It belongs to the eIF-5A family. Lys-52 undergoes hypusination, a unique post-translational modification that consists in the addition of a butylamino group from spermidine to lysine side chain, leading to the formation of the unusual amino acid hypusine. eIF-5As are the only known proteins to undergo this modification, which is essential for their function.

In terms of biological role, translation factor that promotes translation elongation and termination, particularly upon ribosome stalling at specific amino acid sequence contexts. Binds between the exit (E) and peptidyl (P) site of the ribosome and promotes rescue of stalled ribosome: specifically required for efficient translation of polyproline-containing peptides as well as other motifs that stall the ribosome. Acts as a ribosome quality control (RQC) cofactor by joining the RQC complex to facilitate peptidyl transfer during CAT tailing step. In Solanum tuberosum (Potato), this protein is Eukaryotic translation initiation factor 5A-4 (EIF5A4).